The primary structure comprises 433 residues: Probable mannose-6-phosphate isomerase (433 aa).

4 residues coordinate Zn(2+): Gln-103, His-105, Glu-130, and His-277. Arg-296 is an active-site residue.

The protein belongs to the mannose-6-phosphate isomerase type 1 family. Zn(2+) serves as cofactor.

It localises to the cytoplasm. The catalysed reaction is D-mannose 6-phosphate = D-fructose 6-phosphate. It participates in nucleotide-sugar biosynthesis; GDP-alpha-D-mannose biosynthesis; alpha-D-mannose 1-phosphate from D-fructose 6-phosphate: step 1/2. Functionally, involved in the synthesis of the GDP-mannose and dolichol-phosphate-mannose required for a number of critical mannosyl transfer reactions. In Echinococcus multilocularis (Fox tapeworm), this protein is Probable mannose-6-phosphate isomerase (PMIH).